The sequence spans 697 residues: Long-chain-fatty-acid--CoA ligase 6 (697 aa).

Residues 25–45 (LSATTLVSMGALAAILAYWLT) traverse the membrane as a helical; Signal-anchor for type III membrane protein segment. Over 46-697 (HRPKALQPPC…QIEELYSISM (652 aa)) the chain is Cytoplasmic.

This sequence belongs to the ATP-dependent AMP-binding enzyme family. The cofactor is Mg(2+). Expressed predominantly in brain and, to a much lesser extent, in heart and adrenal.

The protein localises to the mitochondrion outer membrane. The protein resides in the peroxisome membrane. Its subcellular location is the microsome membrane. It localises to the endoplasmic reticulum membrane. The catalysed reaction is a long-chain fatty acid + ATP + CoA = a long-chain fatty acyl-CoA + AMP + diphosphate. It carries out the reaction (5Z,8Z,11Z,14Z)-eicosatetraenoate + ATP + CoA = (5Z,8Z,11Z,14Z)-eicosatetraenoyl-CoA + AMP + diphosphate. It catalyses the reaction 15-hydroxy-(5Z,8Z,11Z,13E)-eicosatetraenoate + ATP + CoA = 15-hydroxy-(5Z,8Z,11Z,13E)-eicosatetraenoyl-CoA + AMP + diphosphate. The enzyme catalyses 12-hydroxy-(5Z,8Z,10E,14Z)-eicosatetraenoate + ATP + CoA = 12-hydroxy-(5Z,8Z,10E,14Z)-eicosatetraenoyl-CoA + AMP + diphosphate. The catalysed reaction is 5-hydroxy-(6E,8Z,11Z,14Z)-eicosatetraenoate + ATP + CoA = 5-hydroxy-(6E,8Z,11Z,14Z)-eicosatetraenoyl-CoA + AMP + diphosphate. It carries out the reaction hexadecanoate + ATP + CoA = hexadecanoyl-CoA + AMP + diphosphate. It catalyses the reaction (E)-hexadec-2-enoate + ATP + CoA = (2E)-hexadecenoyl-CoA + AMP + diphosphate. Functionally, catalyzes the conversion of long-chain fatty acids to their active form acyl-CoA for both synthesis of cellular lipids, and degradation via beta-oxidation. Plays an important role in fatty acid metabolism in brain and the acyl-CoAs produced may be utilized exclusively for the synthesis of the brain lipid. This is Long-chain-fatty-acid--CoA ligase 6 from Rattus norvegicus (Rat).